We begin with the raw amino-acid sequence, 371 residues long: UDP-N-acetylglucosamine--N-acetylmuramyl-(pentapeptide) pyrophosphoryl-undecaprenol N-acetylglucosamine transferase (371 aa).

Residues Thr10–Gly12, Asn124, Arg165, Ser191, Ile246, and Gln291 contribute to the UDP-N-acetyl-alpha-D-glucosamine site.

This sequence belongs to the glycosyltransferase 28 family. MurG subfamily.

It is found in the cell inner membrane. It carries out the reaction di-trans,octa-cis-undecaprenyl diphospho-N-acetyl-alpha-D-muramoyl-L-alanyl-D-glutamyl-meso-2,6-diaminopimeloyl-D-alanyl-D-alanine + UDP-N-acetyl-alpha-D-glucosamine = di-trans,octa-cis-undecaprenyl diphospho-[N-acetyl-alpha-D-glucosaminyl-(1-&gt;4)]-N-acetyl-alpha-D-muramoyl-L-alanyl-D-glutamyl-meso-2,6-diaminopimeloyl-D-alanyl-D-alanine + UDP + H(+). The protein operates within cell wall biogenesis; peptidoglycan biosynthesis. Functionally, cell wall formation. Catalyzes the transfer of a GlcNAc subunit on undecaprenyl-pyrophosphoryl-MurNAc-pentapeptide (lipid intermediate I) to form undecaprenyl-pyrophosphoryl-MurNAc-(pentapeptide)GlcNAc (lipid intermediate II). In Geobacter sp. (strain M21), this protein is UDP-N-acetylglucosamine--N-acetylmuramyl-(pentapeptide) pyrophosphoryl-undecaprenol N-acetylglucosamine transferase.